We begin with the raw amino-acid sequence, 446 residues long: Histidine--tRNA ligase (446 aa).

This sequence belongs to the class-II aminoacyl-tRNA synthetase family. In terms of assembly, homodimer.

The protein resides in the cytoplasm. The catalysed reaction is tRNA(His) + L-histidine + ATP = L-histidyl-tRNA(His) + AMP + diphosphate + H(+). In Burkholderia cenocepacia (strain HI2424), this protein is Histidine--tRNA ligase.